The sequence spans 1154 residues: ATP-dependent RNA helicase DBP10 (1154 aa).

Residues 16–58 are disordered; sequence FAARTISATSKPNRNDATASSSKPQKRARRSTKGSDDDGNDDF. Residues 21 to 38 show a composition bias toward polar residues; sequence ISATSKPNRNDATASSSK. Residues 144 to 172 carry the Q motif motif; the sequence is GSFQSMGLHPSLLRSLLIRGFTTPTPIQR. In terms of domain architecture, Helicase ATP-binding spans 177–363; that stretch reads AIMSQPPRDV…KAGLQANPKL (187 aa). 190–197 provides a ligand contact to ATP; sequence ARTGSGKT. The DEAD box motif lies at 311–314; sequence DEAD. 4 disordered regions span residues 417 to 462, 826 to 859, 885 to 939, and 1043 to 1154; these read QFNE…GPGG, IEGG…AGKA, FDTT…PNFY, and MPKT…GASR. The segment covering 438–451 has biased composition (basic and acidic residues); it reads RRAEFKGKTKDKHL. One can recognise a Helicase C-terminal domain in the interval 446 to 602; sequence TKDKHLGNKR…SSHTAIAALA (157 aa). 2 stretches are compositionally biased toward basic residues: residues 844–855 and 918–927; these read VAARNKGKKKAT and RHTKRARTKK. 2 stretches are compositionally biased toward basic and acidic residues: residues 1043–1061 and 1098–1133; these read MPKT…ERSP and AAKD…DTNR. The segment covering 1134-1154 has biased composition (basic residues); it reads RAKRGAARRGRGGHGPRGASR.

This sequence belongs to the DEAD box helicase family. DDX54/DBP10 subfamily.

The protein localises to the nucleus. It is found in the nucleolus. It carries out the reaction ATP + H2O = ADP + phosphate + H(+). Its function is as follows. ATP-binding RNA helicase involved in the biogenesis of 60S ribosomal subunits and is required for the normal formation of 25S and 5.8S rRNAs. This is ATP-dependent RNA helicase DBP10 (DBP10) from Mycosarcoma maydis (Corn smut fungus).